Here is a 413-residue protein sequence, read N- to C-terminus: Serine hydroxymethyltransferase (413 aa).

Residues L117 and 121 to 123 contribute to the (6S)-5,6,7,8-tetrahydrofolate site; that span reads GHL. K226 carries the post-translational modification N6-(pyridoxal phosphate)lysine. 349 to 351 contacts (6S)-5,6,7,8-tetrahydrofolate; that stretch reads SPF.

It belongs to the SHMT family. Homodimer. The cofactor is pyridoxal 5'-phosphate.

It is found in the cytoplasm. The catalysed reaction is (6R)-5,10-methylene-5,6,7,8-tetrahydrofolate + glycine + H2O = (6S)-5,6,7,8-tetrahydrofolate + L-serine. Its pathway is one-carbon metabolism; tetrahydrofolate interconversion. It participates in amino-acid biosynthesis; glycine biosynthesis; glycine from L-serine: step 1/1. In terms of biological role, catalyzes the reversible interconversion of serine and glycine with tetrahydrofolate (THF) serving as the one-carbon carrier. This reaction serves as the major source of one-carbon groups required for the biosynthesis of purines, thymidylate, methionine, and other important biomolecules. Also exhibits THF-independent aldolase activity toward beta-hydroxyamino acids, producing glycine and aldehydes, via a retro-aldol mechanism. This chain is Serine hydroxymethyltransferase, found in Listeria monocytogenes serovar 1/2a (strain ATCC BAA-679 / EGD-e).